Reading from the N-terminus, the 306-residue chain is Small ribosomal subunit protein uS2 (306 aa).

Position 2 is an N-acetylserine (Ser-2). Laminin-binding stretches follow at residues 161–180 and 205–229; these read IPCNNKGAHSVGLMWWMLAR and RDPEEIEKEEQAAAEKATTKEEYQG. 5 [DE]-W-[ST] repeats span residues 230–232, 245–247, 276–278, 286–288, and 304–306; these read EWT, DWS, and EWS. The interval 242–306 is laminin-binding; it reads EVADWSEGVQ…EWTGTTTEWS (65 aa). The disordered stretch occupies residues 261-306; sequence PAERPEIPAAKPAAEDWSSQPASTDDWSAAPTAQASEWTGTTTEWS. The segment covering 277–306 has biased composition (polar residues); it reads WSSQPASTDDWSAAPTAQASEWTGTTTEWS.

It belongs to the universal ribosomal protein uS2 family. In terms of assembly, monomer (37LRP) and homodimer (67LR). Component of the small ribosomal subunit. Mature ribosomes consist of a small (40S) and a large (60S) subunit. The 40S subunit contains about 33 different proteins and 1 molecule of RNA (18S). The 60S subunit contains about 49 different proteins and 3 molecules of RNA (28S, 5.8S and 5S). Interacts with rps21. Interacts with several laminins including at least lamb1. Interacts with mdk. Post-translationally, acylated. Acylation may be a prerequisite for conversion of the monomeric 37 kDa laminin receptor precursor (37LRP) to the mature dimeric 67 kDa laminin receptor (67LR), and may provide a mechanism for membrane association. Cleaved by stromelysin-3 (ST3) at the cell surface. Cleavage by stromelysin-3 may be a mechanism to alter cell-extracellular matrix interactions.

Its subcellular location is the cell membrane. It localises to the cytoplasm. The protein localises to the nucleus. Its function is as follows. Required for the assembly and/or stability of the 40S ribosomal subunit. Required for the processing of the 20S rRNA-precursor to mature 18S rRNA in a late step of the maturation of 40S ribosomal subunits. Also functions as a cell surface receptor for laminin. Plays a role in cell adhesion to the basement membrane and in the consequent activation of signaling transduction pathways. May play a role in cell fate determination and tissue morphogenesis. This is Small ribosomal subunit protein uS2 (rpsa) from Xenopus tropicalis (Western clawed frog).